A 163-amino-acid polypeptide reads, in one-letter code: Transcription elongation factor GreA (163 aa).

Residues 45-65 (NAEYHAAREKQAFIEARINEL) are a coiled coil.

The protein belongs to the GreA/GreB family.

Functionally, necessary for efficient RNA polymerase transcription elongation past template-encoded arresting sites. The arresting sites in DNA have the property of trapping a certain fraction of elongating RNA polymerases that pass through, resulting in locked ternary complexes. Cleavage of the nascent transcript by cleavage factors such as GreA or GreB allows the resumption of elongation from the new 3'terminus. GreA releases sequences of 2 to 3 nucleotides. The polypeptide is Transcription elongation factor GreA (Helicobacter hepaticus (strain ATCC 51449 / 3B1)).